A 126-amino-acid chain; its full sequence is Large ribosomal subunit protein bL17 (126 aa).

Belongs to the bacterial ribosomal protein bL17 family. In terms of assembly, part of the 50S ribosomal subunit. Contacts protein L32.

This is Large ribosomal subunit protein bL17 from Nitrosococcus oceani (strain ATCC 19707 / BCRC 17464 / JCM 30415 / NCIMB 11848 / C-107).